A 94-amino-acid chain; its full sequence is Large ribosomal subunit protein bL28 (94 aa).

The interval 1 to 21 (MARRCEVTGRGTVSGNNVSHS) is disordered. Over residues 11-20 (GTVSGNNVSH) the composition is skewed to polar residues.

It belongs to the bacterial ribosomal protein bL28 family.

The polypeptide is Large ribosomal subunit protein bL28 (Leptospira borgpetersenii serovar Hardjo-bovis (strain JB197)).